Consider the following 350-residue polypeptide: Putative deoxyribonuclease-2 (350 aa).

This sequence belongs to the DNase II family.

The protein is Putative deoxyribonuclease-2 of Burkholderia pseudomallei (strain 1710b).